Here is an 811-residue protein sequence, read N- to C-terminus: Potassium transporter 7 (811 aa).

At 1-52 (MPSYQYLLSLLFYILDCTDRFSVIVTIHNHRVGVLMIVLLQDQWKSYCRTIS) the chain is on the cytoplasmic side. The chain crosses the membrane as a helical span at residues 53–73 (LLAFQSFGVVYGDLSTSPLYV). At 74 to 93 (YKSAFSGRLNNYRDETTIFG) the chain is on the extracellular side. A helical membrane pass occupies residues 94 to 114 (LFSLIFWTLTLLPLLKYVIIV). Over 115 to 181 (LNADDNGEGG…EKHRKLRTCL (67 aa)) the chain is Cytoplasmic. Residues 182–202 (LLFVLFGACMVIGDGVFTPAI) traverse the membrane as a helical segment. Residues 203 to 217 (SVLSAISGLKDPGPG) lie on the Extracellular side of the membrane. A helical transmembrane segment spans residues 218–238 (GIPDGWVVFIACIVLVGLFAL). The Cytoplasmic portion of the chain corresponds to 239–245 (QHRGTHR). A helical membrane pass occupies residues 246–266 (VAFMFAPIVVVWLLSIGVIGL). At 267–296 (YNIIHWNHRIFLALSPHYVIKFFKMTGKDG) the chain is on the extracellular side. A helical membrane pass occupies residues 297–317 (WLSLGGVLLAITGTEAMFADL). Residues 318–326 (GHFTAASIR) lie on the Cytoplasmic side of the membrane. The chain crosses the membrane as a helical span at residues 327-347 (LAFVGAIYPCLVLQYMGQAAF). At 348–366 (LSRNMSAVEDSFYQSVPRS) the chain is on the extracellular side. An N-linked (GlcNAc...) asparagine glycan is attached at asparagine 351. The helical transmembrane segment at 367–387 (LFWPVFVIATLAAVVGSQSII) threads the bilayer. Over 388–418 (SATFSIVKQCLSLGCFPRVKVVHTSRWIHGQ) the chain is Cytoplasmic. Residues 419 to 439 (IYIPEINWILMVLCLAVTLGF) form a helical membrane-spanning segment. The Extracellular segment spans residues 440-450 (RDTTVIGNAYG). A helical transmembrane segment spans residues 451–471 (LACIVVMFVTTWLMALVIIFV). The Cytoplasmic segment spans residues 472–475 (WQKN). The chain crosses the membrane as a helical span at residues 476–496 (ILLALLFVVAFGSIEVVYLSA). The Extracellular portion of the chain corresponds to 497-503 (AVTKVPQ). A helical membrane pass occupies residues 504–524 (GGWAPIVFAFVFMLVMYVWHY). The Cytoplasmic portion of the chain corresponds to 525–811 (GSRRKYLFDL…LVEVGMIYYV (287 aa)). The interval 680-702 (TGLVMRDSNNEASGTSLTRSSRS) is disordered.

Belongs to the HAK/KUP transporter (TC 2.A.72.3) family. As to expression, expressed in roots and shoots.

It is found in the membrane. Its function is as follows. High-affinity potassium transporter. The sequence is that of Potassium transporter 7 (HAK7) from Oryza sativa subsp. japonica (Rice).